We begin with the raw amino-acid sequence, 384 residues long: MSWQEKINAALDARRTADALRRRYPVAQGAGRWLVADECQYLNFSSNDYLGLSHHPDIIRAWKQGAEQFGVGSGGSGHVSGYSVAHQALEEELAEWLGYSRALLFISGFAANQAVITAMMAKEDRIVADRLSHASLLEAASLSPAQLRRFTHNDVAHLARLLASPCPGQQLVVTEGVFSMDGDRAPLAEIQQVTQQHNGWLVVDDAHGTGVIGEQGRGSCWQQQVKPELLVVTFGKGFGVSGAAVLCSNTVADYLLQFARHLIYSTSMPPAQAQALRASLAVIRGEEGDARREKLAVLITRFRAGLQGLPFTLADSRSAIQPLIVGDNARALHLAEKLRQQGCWVTAIRPPTVPAGTARLRLTLTAAHETQDIDLLLEVLHGNG.

Arg21 is a substrate binding site. 108-109 (GF) contacts pyridoxal 5'-phosphate. His133 lines the substrate pocket. Positions 179, 207, and 233 each coordinate pyridoxal 5'-phosphate. N6-(pyridoxal phosphate)lysine is present on Lys236. Thr352 contacts substrate.

The protein belongs to the class-II pyridoxal-phosphate-dependent aminotransferase family. BioF subfamily. As to quaternary structure, homodimer. Pyridoxal 5'-phosphate is required as a cofactor.

The enzyme catalyses 6-carboxyhexanoyl-[ACP] + L-alanine + H(+) = (8S)-8-amino-7-oxononanoate + holo-[ACP] + CO2. It participates in cofactor biosynthesis; biotin biosynthesis. Its function is as follows. Catalyzes the decarboxylative condensation of pimeloyl-[acyl-carrier protein] and L-alanine to produce 8-amino-7-oxononanoate (AON), [acyl-carrier protein], and carbon dioxide. This chain is 8-amino-7-oxononanoate synthase, found in Escherichia fergusonii (strain ATCC 35469 / DSM 13698 / CCUG 18766 / IAM 14443 / JCM 21226 / LMG 7866 / NBRC 102419 / NCTC 12128 / CDC 0568-73).